Reading from the N-terminus, the 240-residue chain is 1-(5-phosphoribosyl)-5-[(5-phosphoribosylamino)methylideneamino] imidazole-4-carboxamide isomerase (240 aa).

The Proton acceptor role is filled by aspartate 8. Catalysis depends on aspartate 129, which acts as the Proton donor.

The protein belongs to the HisA/HisF family.

Its subcellular location is the cytoplasm. The catalysed reaction is 1-(5-phospho-beta-D-ribosyl)-5-[(5-phospho-beta-D-ribosylamino)methylideneamino]imidazole-4-carboxamide = 5-[(5-phospho-1-deoxy-D-ribulos-1-ylimino)methylamino]-1-(5-phospho-beta-D-ribosyl)imidazole-4-carboxamide. The protein operates within amino-acid biosynthesis; L-histidine biosynthesis; L-histidine from 5-phospho-alpha-D-ribose 1-diphosphate: step 4/9. The chain is 1-(5-phosphoribosyl)-5-[(5-phosphoribosylamino)methylideneamino] imidazole-4-carboxamide isomerase from Listeria monocytogenes serotype 4b (strain F2365).